Reading from the N-terminus, the 475-residue chain is Bifunctional protein HldE (475 aa).

Residues 1–321 (MADKIDISLY…RALHQITASH (321 aa)) are ribokinase. 197–200 (NLKE) contributes to the ATP binding site. The active site involves aspartate 266. The tract at residues 346–475 (MTNGCFDILH…TSRLVEKMLN (130 aa)) is cytidylyltransferase.

The protein in the N-terminal section; belongs to the carbohydrate kinase PfkB family. In the C-terminal section; belongs to the cytidylyltransferase family. As to quaternary structure, homodimer.

The catalysed reaction is D-glycero-beta-D-manno-heptose 7-phosphate + ATP = D-glycero-beta-D-manno-heptose 1,7-bisphosphate + ADP + H(+). It catalyses the reaction D-glycero-beta-D-manno-heptose 1-phosphate + ATP + H(+) = ADP-D-glycero-beta-D-manno-heptose + diphosphate. It functions in the pathway nucleotide-sugar biosynthesis; ADP-L-glycero-beta-D-manno-heptose biosynthesis; ADP-L-glycero-beta-D-manno-heptose from D-glycero-beta-D-manno-heptose 7-phosphate: step 1/4. It participates in nucleotide-sugar biosynthesis; ADP-L-glycero-beta-D-manno-heptose biosynthesis; ADP-L-glycero-beta-D-manno-heptose from D-glycero-beta-D-manno-heptose 7-phosphate: step 3/4. Functionally, catalyzes the phosphorylation of D-glycero-D-manno-heptose 7-phosphate at the C-1 position to selectively form D-glycero-beta-D-manno-heptose-1,7-bisphosphate. Catalyzes the ADP transfer from ATP to D-glycero-beta-D-manno-heptose 1-phosphate, yielding ADP-D-glycero-beta-D-manno-heptose. This Coxiella burnetii (strain Dugway 5J108-111) protein is Bifunctional protein HldE.